The primary structure comprises 130 residues: MKILVAVAVFFLVSTQLFAEEIDANDDLNYWSDWSDSDQIKEAMPEPFEHLLQRIARRPKPQQFFGLMGKRDADSSVEKQVALLKALYGHGQISHKRHKTDSFVGLMGKRALNSVAYERSAMQNYERRRK.

An N-terminal signal peptide occupies residues 1–19 (MKILVAVAVFFLVSTQLFA). Positions 20-56 (EEIDANDDLNYWSDWSDSDQIKEAMPEPFEHLLQRIA) are excised as a propeptide. Residues Met-68 and Met-107 each carry the methionine amide modification.

Belongs to the tachykinin family. In terms of processing, the substance P form is cleaved at Pro-59 by the prolyl endopeptidase FAP (seprase) activity (in vitro). Substance P is also cleaved and degraded by Angiotensin-converting enzyme (ACE) and neprilysin (MME).

Its subcellular location is the secreted. Tachykinins are active peptides which excite neurons, evoke behavioral responses, are potent vasodilators and secretagogues, and contract (directly or indirectly) many smooth muscles. The sequence is that of Protachykinin-1 (Tac1) from Mus musculus (Mouse).